The primary structure comprises 100 residues: Large ribosomal subunit protein uL23 (100 aa).

This sequence belongs to the universal ribosomal protein uL23 family. Part of the 50S ribosomal subunit. Contacts protein L29, and trigger factor when it is bound to the ribosome.

Its function is as follows. One of the early assembly proteins it binds 23S rRNA. One of the proteins that surrounds the polypeptide exit tunnel on the outside of the ribosome. Forms the main docking site for trigger factor binding to the ribosome. This Shewanella oneidensis (strain ATCC 700550 / JCM 31522 / CIP 106686 / LMG 19005 / NCIMB 14063 / MR-1) protein is Large ribosomal subunit protein uL23.